Consider the following 575-residue polypeptide: Bifunctional decalin synthase calF (575 aa).

An N-terminal signal peptide occupies residues 1-18; that stretch reads MSFKPLLLSLSLLSPALG. N-linked (GlcNAc...) asparagine glycosylation is found at N46, N103, N127, N175, N268, N308, N359, N425, and N485. In terms of domain architecture, FAD-binding PCMH-type spans 118–297; it reads LGNYASYSIN…LSMTTKVFQD (180 aa).

The protein belongs to the oxygen-dependent FAD-linked oxidoreductase family.

The protein operates within secondary metabolite biosynthesis. Functionally, bifunctional decaline synthase; part of the gene cluster that mediates the biosynthesis of calbistrin A and related compounds. Calbistrin A is a secondary metabolite with an interesting structure that was recently found to have bioactivity against leukemia cells. It consists of two polyketides linked by an ester bond: a bicyclic decalin containing polyketide and a linear 12 carbon dioic acid structure. The polyketide synthase calA is probably responsible for forming the decalin moiety. Because calA lacks a designated enoylreductase (ER) domain, the required activity is provided by the trans-enoyl reductase calK. Following release from the PKS, calF then probably catalyzes the oxidation and the subsequent Diels Alder cycloisomerization that lead to the formation of the decalin moiety. The decalin polyketide backbone includes two C-methyl groups, at C7 and C11 in backbone, of which the C7 position is probably methylated by the methyltransferase domain of calA. A candidate for adding the methyl group at C11, if not done by CalA, is the cluster methyltransferase calH. Several additional tailoring enzymes within the cluster could be involved in the modification of the decalin polyketide product. Those include the 3 cytochrome P450 monooxygenases CalE, CalG and CalL, of which one might be responsible for the introduction of the extra hydroxyl group attached to the backbone of the decalin moiety, at position C9 in the backbone, that allows for attachment of the linear moiety. One tailoring enzyme activity that is expected to be involved in biosynthesis of calbistrin is an acyltransferase for connecting the two polyketide synthase products, and which could be performed by the cluster acyltransferase calJ. The enzyme responsible for the biosynthesis of the linear moiety, probably a second PKS, has not been identified yet. The protein is Bifunctional decalin synthase calF of Penicillium decumbens.